Here is a 364-residue protein sequence, read N- to C-terminus: DNA polymerase IV (364 aa).

One can recognise a UmuC domain in the interval 14–198 (IIHIDMDAFF…LPIEKFHGVG (185 aa)). Mg(2+) contacts are provided by Asp-18 and Asp-116. Glu-117 is an active-site residue.

The protein belongs to the DNA polymerase type-Y family. Monomer. It depends on Mg(2+) as a cofactor.

Its subcellular location is the cytoplasm. The catalysed reaction is DNA(n) + a 2'-deoxyribonucleoside 5'-triphosphate = DNA(n+1) + diphosphate. Its function is as follows. Poorly processive, error-prone DNA polymerase involved in untargeted mutagenesis. Copies undamaged DNA at stalled replication forks, which arise in vivo from mismatched or misaligned primer ends. These misaligned primers can be extended by PolIV. Exhibits no 3'-5' exonuclease (proofreading) activity. May be involved in translesional synthesis, in conjunction with the beta clamp from PolIII. In Streptococcus pyogenes serotype M4 (strain MGAS10750), this protein is DNA polymerase IV.